Here is a 282-residue protein sequence, read N- to C-terminus: Transformer-2 protein homolog alpha (282 aa).

Residues 1–118 are disordered; it reads MSDVEENNFE…TGSRANPDPN (118 aa). Residue S2 is modified to N-acetylserine. 2 positions are modified to phosphoserine: S2 and S14. At T24 the chain carries Phosphothreonine. Positions 51–84 are enriched in basic residues; the sequence is RSRSKSRSRSRRHSHRRYTRSRSHSHSHRRRSRS. 3 positions are modified to phosphoserine: S82, S84, and S86. T88 carries the post-translational modification Phosphothreonine. A compositionally biased stretch (basic residues) spans 92-110; the sequence is RRRRSRSHSPMSNRRRHTG. A phosphoserine mark is found at S96 and S98. The region spanning 119–197 is the RRM domain; it reads TCLGVFGLSL…RRIRVDYSIT (79 aa). Residue K198 forms a Glycyl lysine isopeptide (Lys-Gly) (interchain with G-Cter in SUMO2) linkage. Positions 198–225 are linker; the sequence is KRAHTPTPGIYMGRPTHSGGGGGGGGGG. Disordered regions lie at residues 201–245 and 260–282; these read HTPT…YDRG and SPSPYYSRYRSRSRSRSYSPRRY. T202 and T204 each carry phosphothreonine. A compositionally biased stretch (gly residues) spans 215-230; the sequence is SGGGGGGGGGGGGGGG. Omega-N-methylarginine is present on R232. Basic and acidic residues predominate over residues 232–245; that stretch reads RRRDSYYDRGYDRG. At S236 the chain carries Phosphoserine. Positions 268–282 are enriched in basic residues; sequence YRSRSRSRSYSPRRY.

Belongs to the splicing factor SR family. As to quaternary structure, binds to A3 enhancer proteins SRp75, SRp55, SRp40 and SRp30. Interacts with ILDR1 (via C-terminus) and ILDR2. Phosphorylated in the RS domains.

It is found in the nucleus. Its function is as follows. Sequence-specific RNA-binding protein which participates in the control of pre-mRNA splicing. The sequence is that of Transformer-2 protein homolog alpha from Homo sapiens (Human).